The sequence spans 381 residues: Succinate--CoA ligase [ADP-forming] subunit beta (381 aa).

Positions 9 to 236 (KELLRVAGVP…ESSEAPSEVD (228 aa)) constitute an ATP-grasp domain. ATP is bound by residues lysine 45, 52–54 (GRG), alanine 94, and glutamate 99. Mg(2+) is bound by residues asparagine 191 and aspartate 205. Residues asparagine 256 and 313–315 (GIT) contribute to the substrate site.

It belongs to the succinate/malate CoA ligase beta subunit family. In terms of assembly, heterotetramer of two alpha and two beta subunits. Mg(2+) serves as cofactor.

It catalyses the reaction succinate + ATP + CoA = succinyl-CoA + ADP + phosphate. It carries out the reaction GTP + succinate + CoA = succinyl-CoA + GDP + phosphate. It participates in carbohydrate metabolism; tricarboxylic acid cycle; succinate from succinyl-CoA (ligase route): step 1/1. Succinyl-CoA synthetase functions in the citric acid cycle (TCA), coupling the hydrolysis of succinyl-CoA to the synthesis of either ATP or GTP and thus represents the only step of substrate-level phosphorylation in the TCA. The beta subunit provides nucleotide specificity of the enzyme and binds the substrate succinate, while the binding sites for coenzyme A and phosphate are found in the alpha subunit. The sequence is that of Succinate--CoA ligase [ADP-forming] subunit beta from Gemmatimonas aurantiaca (strain DSM 14586 / JCM 11422 / NBRC 100505 / T-27).